Here is a 358-residue protein sequence, read N- to C-terminus: Chorismate synthase (358 aa).

NADP(+) is bound at residue Arg46. Residues 123–125 (RSS), 235–236 (NA), Gly275, 290–294 (KPTPS), and Arg316 each bind FMN.

This sequence belongs to the chorismate synthase family. As to quaternary structure, homotetramer. The cofactor is FMNH2.

The catalysed reaction is 5-O-(1-carboxyvinyl)-3-phosphoshikimate = chorismate + phosphate. Its pathway is metabolic intermediate biosynthesis; chorismate biosynthesis; chorismate from D-erythrose 4-phosphate and phosphoenolpyruvate: step 7/7. Functionally, catalyzes the anti-1,4-elimination of the C-3 phosphate and the C-6 proR hydrogen from 5-enolpyruvylshikimate-3-phosphate (EPSP) to yield chorismate, which is the branch point compound that serves as the starting substrate for the three terminal pathways of aromatic amino acid biosynthesis. This reaction introduces a second double bond into the aromatic ring system. This chain is Chorismate synthase, found in Helicobacter hepaticus (strain ATCC 51449 / 3B1).